The sequence spans 185 residues: Pro-adrenomedullin (185 aa).

The signal sequence occupies residues 1-21 (MKLVSIALMLLGSLAVLGADT). Arg41 is subject to Arginine amide. Residues 45–91 (ELQASSSYPTGLVDEKTVPTQTLGLQDKQSTSSTPQASTQSTAHIRV) constitute a propeptide that is removed on maturation. The segment at 68-89 (GLQDKQSTSSTPQASTQSTAHI) is disordered. Positions 73-87 (QSTSSTPQASTQSTA) are enriched in low complexity. A disulfide bridge links Cys107 with Cys112. The disordered stretch occupies residues 125 to 185 (TDKDKDGMAP…HQDISRVSRL (61 aa)). Tyr143 carries the post-translational modification Tyrosine amide. The propeptide at 150–185 (SLPEVLRARTVESSQEQTHSAPASPAHQDISRVSRL) is preproAM C-terminal fragment. A compositionally biased stretch (polar residues) spans 160–170 (VESSQEQTHSA).

The protein belongs to the adrenomedullin family. Expressed in adrenal glands, lung, kidney, heart, spleen, duodenum and submandibular glands.

The protein resides in the secreted. In terms of biological role, adrenomedullin/ADM and proadrenomedullin N-20 terminal peptide/PAMP are peptide hormones that act as potent hypotensive and vasodilatator agents. Numerous actions have been reported most related to the physiologic control of fluid and electrolyte homeostasis. ADM function is mediated by the CALCRL-RAMP2 and CALCRL-RAMP3 receptor complexes with ADM showing the highest potency for the CALCRL-RAMP2 complex. The polypeptide is Pro-adrenomedullin (Rattus norvegicus (Rat)).